The chain runs to 510 residues: Conditioned medium factor receptor 1 (510 aa).

The Cytoplasmic portion of the chain corresponds to methionine 1–lysine 36. The helical transmembrane segment at tyrosine 37–valine 55 threads the bilayer. The Extracellular segment spans residues lysine 56–aspartate 510.

The protein localises to the membrane. Receptor for cmfA, that appears to mediate the G-independent cmfA signal transduction. The polypeptide is Conditioned medium factor receptor 1 (cmfB) (Dictyostelium discoideum (Social amoeba)).